A 69-amino-acid polypeptide reads, in one-letter code: Amphipathic peptide OcyC2 (69 aa).

Residues 1 to 23 (MKTQFAILMIAVVLMQMLVQTEG) form the signal peptide. Isoleucine amide is present on Ile37. The propeptide occupies 41 to 69 (GLKKLDQLDDTFDSDLSDADVKLLREMFK).

The protein belongs to the non-disulfide-bridged peptide (NDBP) superfamily. Short antimicrobial peptide (group 4) family. Expressed by the venom gland.

It localises to the secreted. The protein resides in the target cell membrane. Amphipathic peptide with antimicrobial activity. Shows antifungal activity with MIC values ranging from 25 to 200 uM. Does not show antifungal activity against Candida glabrata (ATCC90030) and Candida parapsilosis (ATCC22019) (MIC&gt;400 uM). In Opisthacanthus cayaporum (South American scorpion), this protein is Amphipathic peptide OcyC2.